Reading from the N-terminus, the 138-residue chain is MQGGGGVSCAVAGDAPSSTRGGGGGGMLGLTLFDPPGGEQPAERIGRLVRESPVVIFARRGCCMCHVMRRLLAAVGAHATVIELDEAAEEAAASAAAAAAVPALFVGGAPVGGLDGLMGLHLSGRLVPRLREVGALCG.

Residues 17 to 40 (SSTRGGGGGGMLGLTLFDPPGGEQ) form a disordered region. Residues 42–137 (AERIGRLVRE…PRLREVGALC (96 aa)) enclose the Glutaredoxin domain. Residues C62 and C65 are joined by a disulfide bond.

This sequence belongs to the glutaredoxin family. CC-type subfamily.

The protein localises to the cytoplasm. Functionally, has a glutathione-disulfide oxidoreductase activity in the presence of NADPH and glutathione reductase. Reduces low molecular weight disulfides and proteins. This is Glutaredoxin-C7 (GRXC7) from Oryza sativa subsp. japonica (Rice).